Here is a 196-residue protein sequence, read N- to C-terminus: Agamous-like MADS-box protein AGL27 (196 aa).

Positions M1–D61 constitute an MADS-box domain. A K-box domain is found at A80 to L170. The tract at residues E175–N196 is disordered.

Interacts with AGL39, AGL97 and AGL74. Expressed in most plant tissues, embryo, seedlings, roots, leaves, stems, inflorescence, pollen, siliques and flowers.

It localises to the nucleus. In terms of biological role, probable transcription factor involved in the negative regulation of flowering time in both long and short days, probably through the photoperiodic and vernalization pathways. Prevents premature flowering. This is Agamous-like MADS-box protein AGL27 (AGL27) from Arabidopsis thaliana (Mouse-ear cress).